The chain runs to 142 residues: HTH-type transcriptional regulator MntR (142 aa).

Residues 1 to 63 (MPTPSMEDYI…YEKYRGLILT (63 aa)) form the HTH dtxR-type domain. Residues Asp-8, Glu-11, His-77, Glu-99, Glu-102, and His-103 each contribute to the Mn(2+) site.

The protein belongs to the DtxR/MntR family. In terms of assembly, homodimer.

The protein resides in the cytoplasm. With respect to regulation, DNA binding is strongly activated by Mn(2+). Central regulator of manganese homeostasis. This is HTH-type transcriptional regulator MntR from Listeria monocytogenes serotype 4b (strain F2365).